The primary structure comprises 216 residues: Soluble inorganic pyrophosphatase 5 (216 aa).

The tract at residues 1–20 (MNGEEVKTSQPQKKLQNPTP) is disordered. Positions 8–20 (TSQPQKKLQNPTP) are enriched in polar residues. Positions 66 and 80 each coordinate substrate. Residue Tyr-88 is the Proton donor of the active site. Tyr-92 is a substrate binding site. Asp-102, Asp-107, and Asp-139 together coordinate Mg(2+). Tyr-176 is a substrate binding site.

Belongs to the PPase family. It depends on Mg(2+) as a cofactor.

It localises to the cytoplasm. The enzyme catalyses diphosphate + H2O = 2 phosphate + H(+). In Arabidopsis thaliana (Mouse-ear cress), this protein is Soluble inorganic pyrophosphatase 5.